Consider the following 260-residue polypeptide: Lipid II isoglutaminyl synthase (glutamine-hydrolyzing) subunit GatD (260 aa).

The 199-residue stretch at 16–214 (QLNIAHLYGN…FHGPILSRNA (199 aa)) folds into the GATase cobBQ-type domain. The active-site Nucleophile is Cys107. Arg142 provides a ligand contact to substrate. His206 is an active-site residue.

The protein belongs to the CobB/CobQ family. GatD subfamily. In terms of assembly, forms a heterodimer with MurT.

It carries out the reaction beta-D-GlcNAc-(1-&gt;4)-Mur2Ac(oyl-L-Ala-gamma-D-Glu-L-Lys-D-Ala-D-Ala)-di-trans,octa-cis-undecaprenyl diphosphate + L-glutamine + ATP + H2O = beta-D-GlcNAc-(1-&gt;4)-Mur2Ac(oyl-L-Ala-D-isoglutaminyl-L-Lys-D-Ala-D-Ala)-di-trans,octa-cis-undecaprenyl diphosphate + L-glutamate + ADP + phosphate + H(+). The enzyme catalyses L-glutamine + H2O = L-glutamate + NH4(+). The protein operates within cell wall biogenesis; peptidoglycan biosynthesis. The lipid II isoglutaminyl synthase complex catalyzes the formation of alpha-D-isoglutamine in the cell wall lipid II stem peptide. The GatD subunit catalyzes the hydrolysis of glutamine to glutamate and ammonia. The resulting ammonia molecule is channeled to the active site of MurT. This is Lipid II isoglutaminyl synthase (glutamine-hydrolyzing) subunit GatD from Streptococcus pneumoniae (strain ATCC BAA-255 / R6).